A 305-amino-acid chain; its full sequence is Endonuclease 1 (305 aa).

The N-terminal stretch at 1-28 is a signal peptide; the sequence is MASAFRSSTRLILVLGILILCSVSSVRS. Positions 29 and 34 each coordinate a divalent metal cation. 29–34 contacts substrate; sequence WSKEGH. Cysteines 38 and 69 form a disulfide. A divalent metal cation-binding residues include D73 and H88. Residues 73-79, 88-91, and 98-103 contribute to the substrate site; these read DQIRHWY, HYID, and SYEYSR. 3 disulfide bridges follow: C97–C249, C105–C115, and C230–C236. Substrate-binding residues include N122 and Y139. A glycan (N-linked (GlcNAc...) asparagine) is linked at N122. A glycan (N-linked (GlcNAc...) asparagine) is linked at N140. Positions 150, 154, 160, 184, and 188 each coordinate a divalent metal cation. Residues 150 to 199 form a substrate binding region; sequence HFMGDIHQPMHVGFTSDEGGNTIDLRWYKHKSNLHHVWDREIILTALKEN. N214 carries N-linked (GlcNAc...) asparagine glycosylation. A propeptide spans 287–305 (removed in mature form); that stretch reads MILNRVFSDDHAIAGVAAT.

This sequence belongs to the nuclease type I family. As to quaternary structure, monomer. Requires Mn(2+) as cofactor. The cofactor is Ca(2+). Mostly expressed in flowers and during leaf and stem senescence, and, to a lower extent, detectable at low levels in roots, leaves, and stems. Particularly expressed in senescing tissues in a NAC92/ORE1-dependent manner.

It carries out the reaction Endonucleolytic cleavage to 5'-phosphomononucleotide and 5'-phosphooligonucleotide end-products.. Endonuclease that can use RNA, single-stranded and double-stranded DNA as substrates. Hydrolyzes single-stranded DNA and RNA without apparent specificity for bases during senescence. Endonuclease that recognizes and cleaves all types of mismatches with high efficiency, including heteroduplex double-stranded DNA. Maybe involved in programmed cell death (PCD) and senescence. The sequence is that of Endonuclease 1 from Arabidopsis thaliana (Mouse-ear cress).